Reading from the N-terminus, the 701-residue chain is Elongation factor G 1 (701 aa).

In terms of domain architecture, tr-type G spans 8-290; sequence ERYRNIGISA…AVIDYLPSPL (283 aa). GTP-binding positions include 17-24, 88-92, and 142-145; these read AHIDAGKT, DTPGH, and NKMD.

This sequence belongs to the TRAFAC class translation factor GTPase superfamily. Classic translation factor GTPase family. EF-G/EF-2 subfamily.

The protein localises to the cytoplasm. Functionally, catalyzes the GTP-dependent ribosomal translocation step during translation elongation. During this step, the ribosome changes from the pre-translocational (PRE) to the post-translocational (POST) state as the newly formed A-site-bound peptidyl-tRNA and P-site-bound deacylated tRNA move to the P and E sites, respectively. Catalyzes the coordinated movement of the two tRNA molecules, the mRNA and conformational changes in the ribosome. The polypeptide is Elongation factor G 1 (Paraburkholderia xenovorans (strain LB400)).